Here is a 450-residue protein sequence, read N- to C-terminus: Bifunctional protein GlmU (450 aa).

The segment at 1–226 (MLAVAVLAAG…PDEVNGINNR (226 aa)) is pyrophosphorylase. Residues 7–10 (LAAG), Lys21, Gln73, and 78–79 (GT) each bind UDP-N-acetyl-alpha-D-glucosamine. Asp103 contributes to the Mg(2+) binding site. Residues Gly140, Glu155, Asn170, and Asn224 each contribute to the UDP-N-acetyl-alpha-D-glucosamine site. Asn224 lines the Mg(2+) pocket. Positions 227–247 (QQLAQCETMLQERLRHHWMAE) are linker. An N-acetyltransferase region spans residues 248–450 (GVTFVDPASC…IKENWAGPQG (203 aa)). Positions 329 and 347 each coordinate UDP-N-acetyl-alpha-D-glucosamine. His359 acts as the Proton acceptor in catalysis. Positions 362 and 373 each coordinate UDP-N-acetyl-alpha-D-glucosamine. Acetyl-CoA contacts are provided by residues Ala376, 382–383 (NY), Ala419, and Arg436.

This sequence in the N-terminal section; belongs to the N-acetylglucosamine-1-phosphate uridyltransferase family. In the C-terminal section; belongs to the transferase hexapeptide repeat family. In terms of assembly, homotrimer. Mg(2+) is required as a cofactor.

It localises to the cytoplasm. It catalyses the reaction alpha-D-glucosamine 1-phosphate + acetyl-CoA = N-acetyl-alpha-D-glucosamine 1-phosphate + CoA + H(+). The enzyme catalyses N-acetyl-alpha-D-glucosamine 1-phosphate + UTP + H(+) = UDP-N-acetyl-alpha-D-glucosamine + diphosphate. Its pathway is nucleotide-sugar biosynthesis; UDP-N-acetyl-alpha-D-glucosamine biosynthesis; N-acetyl-alpha-D-glucosamine 1-phosphate from alpha-D-glucosamine 6-phosphate (route II): step 2/2. It functions in the pathway nucleotide-sugar biosynthesis; UDP-N-acetyl-alpha-D-glucosamine biosynthesis; UDP-N-acetyl-alpha-D-glucosamine from N-acetyl-alpha-D-glucosamine 1-phosphate: step 1/1. The protein operates within bacterial outer membrane biogenesis; LPS lipid A biosynthesis. Catalyzes the last two sequential reactions in the de novo biosynthetic pathway for UDP-N-acetylglucosamine (UDP-GlcNAc). The C-terminal domain catalyzes the transfer of acetyl group from acetyl coenzyme A to glucosamine-1-phosphate (GlcN-1-P) to produce N-acetylglucosamine-1-phosphate (GlcNAc-1-P), which is converted into UDP-GlcNAc by the transfer of uridine 5-monophosphate (from uridine 5-triphosphate), a reaction catalyzed by the N-terminal domain. The sequence is that of Bifunctional protein GlmU from Synechococcus sp. (strain RCC307).